A 77-amino-acid chain; its full sequence is DNA-directed RNA polymerase subunit omega (77 aa).

It belongs to the RNA polymerase subunit omega family. In terms of assembly, in cyanobacteria the RNAP catalytic core is composed of 2 alpha, 1 beta, 1 beta', 1 gamma and 1 omega subunit. When a sigma factor is associated with the core the holoenzyme is formed, which can initiate transcription.

The enzyme catalyses RNA(n) + a ribonucleoside 5'-triphosphate = RNA(n+1) + diphosphate. In terms of biological role, promotes RNA polymerase assembly. Latches the N- and C-terminal regions of the beta' subunit thereby facilitating its interaction with the beta and alpha subunits. The sequence is that of DNA-directed RNA polymerase subunit omega from Thermosynechococcus vestitus (strain NIES-2133 / IAM M-273 / BP-1).